The primary structure comprises 204 residues: RNA-free ribonuclease P (204 aa).

It belongs to the HARP family.

The catalysed reaction is Endonucleolytic cleavage of RNA, removing 5'-extranucleotides from tRNA precursor.. In terms of biological role, RNA-free RNase P that catalyzes the removal of the 5'-leader sequence from pre-tRNA to produce the mature 5'-terminus. This chain is RNA-free ribonuclease P, found in Ignicoccus hospitalis (strain KIN4/I / DSM 18386 / JCM 14125).